We begin with the raw amino-acid sequence, 157 residues long: Arginine repressor (157 aa).

It belongs to the ArgR family.

The protein localises to the cytoplasm. The protein operates within amino-acid biosynthesis; L-arginine biosynthesis [regulation]. Regulates arginine biosynthesis genes. The sequence is that of Arginine repressor from Bacteroides fragilis (strain YCH46).